We begin with the raw amino-acid sequence, 235 residues long: Leucyl/phenylalanyl-tRNA--protein transferase (235 aa).

Belongs to the L/F-transferase family.

Its subcellular location is the cytoplasm. It catalyses the reaction N-terminal L-lysyl-[protein] + L-leucyl-tRNA(Leu) = N-terminal L-leucyl-L-lysyl-[protein] + tRNA(Leu) + H(+). The catalysed reaction is N-terminal L-arginyl-[protein] + L-leucyl-tRNA(Leu) = N-terminal L-leucyl-L-arginyl-[protein] + tRNA(Leu) + H(+). It carries out the reaction L-phenylalanyl-tRNA(Phe) + an N-terminal L-alpha-aminoacyl-[protein] = an N-terminal L-phenylalanyl-L-alpha-aminoacyl-[protein] + tRNA(Phe). Functions in the N-end rule pathway of protein degradation where it conjugates Leu, Phe and, less efficiently, Met from aminoacyl-tRNAs to the N-termini of proteins containing an N-terminal arginine or lysine. This is Leucyl/phenylalanyl-tRNA--protein transferase from Shewanella frigidimarina (strain NCIMB 400).